The chain runs to 464 residues: AAC-rich mRNA clone AAC11 protein (464 aa).

Residues Met1–Ile15 show a composition bias toward polar residues. 2 disordered regions span residues Met1–Asn112 and Ser125–His464. 3 stretches are compositionally biased toward low complexity: residues Gln16–Gln65, Asn78–Asn88, and Ile130–Asn160. Polar residues predominate over residues Leu161 to Ser174. 3 consecutive DNA-binding regions (a.T hook) follow at residues Lys177 to Ser189, Lys198 to Glu210, and Asn224 to Glu236. Polar residues predominate over residues Asp240–Gly253. The segment at residues Pro255–Asp267 is a DNA-binding region (a.T hook 4). A compositionally biased stretch (low complexity) spans Asn276–Gly428. Residues Leu433–His464 show a composition bias toward polar residues.

This is AAC-rich mRNA clone AAC11 protein (AAC11) from Dictyostelium discoideum (Social amoeba).